Consider the following 41-residue polypeptide: Divisome-associated membrane protein Blr (41 aa).

The Cytoplasmic portion of the chain corresponds to 1–3 (MNR). Residues 4-24 (LIELTGWIVLVVSVILLGVAS) traverse the membrane as a helical segment. Residues 25–41 (HIDNYQPPEQSASVQHK) lie on the Periplasmic side of the membrane.

Interacts with FtsL and several other divisomal proteins, including FtsI, FtsK, FtsN, FtsQ, FtsW and YmgF. Post-translationally, the N-terminus is blocked.

Its subcellular location is the cell inner membrane. Component of the cell division machinery, which is probably involved in the stabilization of the divisome under certain stress conditions. The sequence is that of Divisome-associated membrane protein Blr (blr) from Escherichia coli (strain K12).